The following is a 78-amino-acid chain: D-alanyl carrier protein (78 aa).

The region spanning 1–78 (MEFREQVLNL…KIVEALEELR (78 aa)) is the Carrier domain. Ser-36 carries the post-translational modification O-(pantetheine 4'-phosphoryl)serine.

It belongs to the DltC family. 4'-phosphopantetheine is transferred from CoA to a specific serine of apo-DCP.

The protein resides in the cytoplasm. It participates in cell wall biogenesis; lipoteichoic acid biosynthesis. Carrier protein involved in the D-alanylation of lipoteichoic acid (LTA). The loading of thioester-linked D-alanine onto DltC is catalyzed by D-alanine--D-alanyl carrier protein ligase DltA. The DltC-carried D-alanyl group is further transferred to cell membrane phosphatidylglycerol (PG) by forming an ester bond, probably catalyzed by DltD. D-alanylation of LTA plays an important role in modulating the properties of the cell wall in Gram-positive bacteria, influencing the net charge of the cell wall. The sequence is that of D-alanyl carrier protein from Staphylococcus aureus (strain Mu50 / ATCC 700699).